A 258-amino-acid chain; its full sequence is Probable parvulin-type peptidyl-prolyl cis-trans isomerase (258 aa).

The signal sequence occupies residues 1–19 (MKRIAMLAAACVIAVPAFA). One can recognise a PpiC domain in the interval 127 to 219 (KMEYKVRHIL…FGWHVIQVDD (93 aa)). Over residues 158–175 (DDLAKKNSKDPGSAERGG) the composition is skewed to basic and acidic residues. Residues 158–178 (DDLAKKNSKDPGSAERGGDLG) are disordered.

It belongs to the PpiC/parvulin rotamase family.

It carries out the reaction [protein]-peptidylproline (omega=180) = [protein]-peptidylproline (omega=0). In Bordetella bronchiseptica (strain ATCC BAA-588 / NCTC 13252 / RB50) (Alcaligenes bronchisepticus), this protein is Probable parvulin-type peptidyl-prolyl cis-trans isomerase.